A 127-amino-acid polypeptide reads, in one-letter code: Cystatin cpi-1 (127 aa).

An N-terminal signal peptide occupies residues 1-19; sequence MFFPIVWLSVLLIISKSFA. Residues 68–72 carry the Secondary area of contact motif; that stretch reads QVVAG. C86 and C98 form a disulfide bridge.

The protein belongs to the cystatin family.

Functionally, cysteine protease inhibitor which inhibits members of the peptidase C1 family. Does not inhibit asparaginyl endopeptidase. In Brugia malayi (Filarial nematode worm), this protein is Cystatin cpi-1.